We begin with the raw amino-acid sequence, 324 residues long: Glyoxylate/hydroxypyruvate reductase B (324 aa).

Catalysis depends on residues arginine 237 and glutamate 266. Catalysis depends on histidine 285, which acts as the Proton donor.

It belongs to the D-isomer specific 2-hydroxyacid dehydrogenase family. GhrB subfamily. In terms of assembly, homodimer.

The protein resides in the cytoplasm. It carries out the reaction glycolate + NADP(+) = glyoxylate + NADPH + H(+). The enzyme catalyses (R)-glycerate + NAD(+) = 3-hydroxypyruvate + NADH + H(+). The catalysed reaction is (R)-glycerate + NADP(+) = 3-hydroxypyruvate + NADPH + H(+). Catalyzes the NADPH-dependent reduction of glyoxylate and hydroxypyruvate into glycolate and glycerate, respectively. The chain is Glyoxylate/hydroxypyruvate reductase B from Escherichia coli O17:K52:H18 (strain UMN026 / ExPEC).